The sequence spans 609 residues: Glutamine--fructose-6-phosphate aminotransferase [isomerizing] (609 aa).

Cys-2 serves as the catalytic Nucleophile; for GATase activity. The region spanning 2–219 (CGIVGYIGGR…DGECARLTRD (218 aa)) is the Glutamine amidotransferase type-2 domain. SIS domains follow at residues 285–424 (SSDL…LRGT) and 458–599 (LARE…VDQP). Lys-604 functions as the For Fru-6P isomerization activity in the catalytic mechanism.

As to quaternary structure, homodimer.

It localises to the cytoplasm. The catalysed reaction is D-fructose 6-phosphate + L-glutamine = D-glucosamine 6-phosphate + L-glutamate. Its function is as follows. Catalyzes the first step in hexosamine metabolism, converting fructose-6P into glucosamine-6P using glutamine as a nitrogen source. The polypeptide is Glutamine--fructose-6-phosphate aminotransferase [isomerizing] (Gloeobacter violaceus (strain ATCC 29082 / PCC 7421)).